Consider the following 90-residue polypeptide: Secretoglobin family 1D member 2 (90 aa).

The first 21 residues, 1–21, serve as a signal peptide directing secretion; it reads MKLSVCLLLVTLALCCYQANA.

Belongs to the secretoglobin family. Lipophilin subfamily. Highest expression was found in skeletal muscle. Expressed as well in thymus, trachea, kidney, steroid responsive tissues (prostate, testis, uterus, breast and ovary) and salivary gland.

Its subcellular location is the secreted. Its function is as follows. May bind androgens and other steroids, may also bind estramustine, a chemotherapeutic agent used for prostate cancer. May be under transcriptional regulation of steroid hormones. The polypeptide is Secretoglobin family 1D member 2 (SCGB1D2) (Homo sapiens (Human)).